Reading from the N-terminus, the 121-residue chain is Large ribosomal subunit protein bL12 (121 aa).

This sequence belongs to the bacterial ribosomal protein bL12 family. Homodimer. Part of the ribosomal stalk of the 50S ribosomal subunit. Forms a multimeric L10(L12)X complex, where L10 forms an elongated spine to which 2 to 4 L12 dimers bind in a sequential fashion. Binds GTP-bound translation factors.

Its function is as follows. Forms part of the ribosomal stalk which helps the ribosome interact with GTP-bound translation factors. Is thus essential for accurate translation. This Shigella sonnei (strain Ss046) protein is Large ribosomal subunit protein bL12.